A 305-amino-acid polypeptide reads, in one-letter code: GTPase Era (305 aa).

In terms of domain architecture, Era-type G spans 11-181; that stretch reads RSGFVSFVGR…IKVMTDLLPE (171 aa). Positions 19-26 are G1; it reads GRPNTGKS. 19–26 contributes to the GTP binding site; that stretch reads GRPNTGKS. Positions 45-49 are G2; that stretch reads ETTRH. Residues 66–69 form a G3 region; the sequence is DTPG. Residues 66–70 and 130–133 each bind GTP; these read DTPGL and TKAD. Positions 130–133 are G4; the sequence is TKAD. Residues 160–162 form a G5 region; the sequence is VSS. The region spanning 212 to 291 is the KH type-2 domain; it reads LKNELPHSVA…FLDLRIKVLK (80 aa).

It belongs to the TRAFAC class TrmE-Era-EngA-EngB-Septin-like GTPase superfamily. Era GTPase family. In terms of assembly, monomer.

Its subcellular location is the cytoplasm. The protein localises to the cell membrane. An essential GTPase that binds both GDP and GTP, with rapid nucleotide exchange. Plays a role in 16S rRNA processing and 30S ribosomal subunit biogenesis and possibly also in cell cycle regulation and energy metabolism. The chain is GTPase Era from Corynebacterium glutamicum (strain ATCC 13032 / DSM 20300 / JCM 1318 / BCRC 11384 / CCUG 27702 / LMG 3730 / NBRC 12168 / NCIMB 10025 / NRRL B-2784 / 534).